An 86-amino-acid polypeptide reads, in one-letter code: Sodium channel neurotoxin MeuNaTxalpha-5 (86 aa).

A signal peptide spans 1-19 (MNYLILISFALLVITGVES). Residues 21–85 (RDAYIAKPHN…VPIRIPGKCH (65 aa)) enclose the LCN-type CS-alpha/beta domain. Intrachain disulfides connect Cys31–Cys84, Cys35–Cys57, Cys43–Cys67, and Cys47–Cys69. Residue Arg86 is a propeptide, removed by a carboxypeptidase.

This sequence belongs to the long (4 C-C) scorpion toxin superfamily. Sodium channel inhibitor family. Alpha subfamily. Expressed by the venom gland.

The protein resides in the secreted. Alpha toxins bind voltage-independently at site-3 of sodium channels (Nav) and inhibit the inactivation of the activated channels, thereby blocking neuronal transmission. This toxin inhibits inactivation of Nav1.6/SCN8A (EC(50)=790 nM) and drosophila DmNav1 (EC(50)=280 nM). The toxin (1 uM) does not significantly shift the midpoint of activation at the two channels, but induces a significant depolarizing shift in the V(1/2) of inactivation of the channels. Has antimicrobial activity. The protein is Sodium channel neurotoxin MeuNaTxalpha-5 of Mesobuthus eupeus (Lesser Asian scorpion).